A 513-amino-acid chain; its full sequence is Putative ribose/galactose/methyl galactoside import ATP-binding protein 2 (513 aa).

2 ABC transporter domains span residues L24–E260 and V270–L510. G56 to S63 lines the ATP pocket.

The protein belongs to the ABC transporter superfamily. Carbohydrate importer 2 (CUT2) (TC 3.A.1.2) family.

It is found in the cell inner membrane. It catalyses the reaction D-ribose(out) + ATP + H2O = D-ribose(in) + ADP + phosphate + H(+). The catalysed reaction is D-galactose(out) + ATP + H2O = D-galactose(in) + ADP + phosphate + H(+). Functionally, part of an ABC transporter complex involved in carbohydrate import. Could be involved in ribose, galactose and/or methyl galactoside import. Responsible for energy coupling to the transport system. The protein is Putative ribose/galactose/methyl galactoside import ATP-binding protein 2 of Rhizobium meliloti (strain 1021) (Ensifer meliloti).